A 272-amino-acid chain; its full sequence is Low-density lipoprotein receptor class A domain-containing protein 2 (272 aa).

A signal peptide spans 1 to 25 (MEACCLLQLPQRLLLLGAAALTATA). The Extracellular segment spans residues 26-233 (LETADLAELC…GSTDAHTSRS (208 aa)). Asparagine 97 is a glycosylation site (N-linked (GlcNAc...) asparagine). Positions 172 to 214 (PCGAYFRCQNGRCIPSSLVCDPWGMDNCGDGSDQGSWSPADCR) constitute an LDL-receptor class A domain. Disulfide bonds link cysteine 173-cysteine 184, cysteine 179-cysteine 199, and cysteine 191-cysteine 213. Residues 202-272 (GSDQGSWSPA…QDAALEGSTE (71 aa)) are disordered. A compositionally biased stretch (polar residues) spans 220-236 (PSQTGSTDAHTSRSLTP). The helical transmembrane segment at 234–250 (LTPSPALGSAGSLWIAA) threads the bilayer. At 251-272 (ERSSPAGRDPTRQDAALEGSTE) the chain is on the cytoplasmic side.

It belongs to the LDLR family.

Its subcellular location is the membrane. This chain is Low-density lipoprotein receptor class A domain-containing protein 2 (LDLRAD2), found in Homo sapiens (Human).